Reading from the N-terminus, the 558-residue chain is Urocanate hydratase (558 aa).

Residues Gly-53 to Gly-54, Gln-131, Gly-177 to Gly-179, Glu-197, Arg-202, Asn-243 to Ala-244, Gln-264 to His-268, Tyr-274 to Leu-275, and Tyr-323 contribute to the NAD(+) site. The active site involves Cys-411. Gly-493 is an NAD(+) binding site.

It belongs to the urocanase family. It depends on NAD(+) as a cofactor.

The protein resides in the cytoplasm. The enzyme catalyses 4-imidazolone-5-propanoate = trans-urocanate + H2O. It participates in amino-acid degradation; L-histidine degradation into L-glutamate; N-formimidoyl-L-glutamate from L-histidine: step 2/3. Catalyzes the conversion of urocanate to 4-imidazolone-5-propionate. The polypeptide is Urocanate hydratase (Idiomarina loihiensis (strain ATCC BAA-735 / DSM 15497 / L2-TR)).